We begin with the raw amino-acid sequence, 301 residues long: Probable alpha-L-glutamate ligase 1 (301 aa).

One can recognise an ATP-grasp domain in the interval 104 to 287 (LQLLSRKGIG…VTEPIVEYIE (184 aa)). ATP is bound by residues K141, 178–179 (EY), D187, and 211–213 (RSN). Mg(2+) contacts are provided by D248, E260, and N262. Positions 248, 260, and 262 each coordinate Mn(2+).

Belongs to the RimK family. The cofactor is Mg(2+). It depends on Mn(2+) as a cofactor.

The polypeptide is Probable alpha-L-glutamate ligase 1 (Shewanella baltica (strain OS155 / ATCC BAA-1091)).